The sequence spans 162 residues: NADH-quinone oxidoreductase subunit I (162 aa).

2 4Fe-4S ferredoxin-type domains span residues Leu-52 to Gly-82 and Thr-93 to Asn-122. [4Fe-4S] cluster contacts are provided by Cys-62, Cys-65, Cys-68, Cys-72, Cys-102, Cys-105, Cys-108, and Cys-112.

It belongs to the complex I 23 kDa subunit family. In terms of assembly, NDH-1 is composed of 14 different subunits. Subunits NuoA, H, J, K, L, M, N constitute the membrane sector of the complex. The cofactor is [4Fe-4S] cluster.

It localises to the cell inner membrane. It catalyses the reaction a quinone + NADH + 5 H(+)(in) = a quinol + NAD(+) + 4 H(+)(out). In terms of biological role, NDH-1 shuttles electrons from NADH, via FMN and iron-sulfur (Fe-S) centers, to quinones in the respiratory chain. The immediate electron acceptor for the enzyme in this species is believed to be ubiquinone. Couples the redox reaction to proton translocation (for every two electrons transferred, four hydrogen ions are translocated across the cytoplasmic membrane), and thus conserves the redox energy in a proton gradient. The polypeptide is NADH-quinone oxidoreductase subunit I (Azorhizobium caulinodans (strain ATCC 43989 / DSM 5975 / JCM 20966 / LMG 6465 / NBRC 14845 / NCIMB 13405 / ORS 571)).